The sequence spans 1803 residues: MATPVRGETRNVIDDNISARIQSKVKTNDTVRQTPSSLRKVSIKDEQVRQYQRNLNRFKTILNGLKAEEEKLSEADDIQMLAEKLLKLGETIDKVENRIVDLVEKIQLLETNENNNILHEHIDATGTYYLFDTLTSTNKRFYPKDCVFDYRTNNVENIPILLNNFKKFIKKYQFDDVFENDIIEIDPRENEILCKIIKEGLGESLDIMNTNTTDIFRIIDGLKKQNIEVCMVEMSELEPGEKVLVDTTCRNSALLMNKLQKLVLMEKWIFSKCCQDCPNLKDYLQEAIMGTLHESLRNSVKQRLYNIPHDVGIDHEEFLINTVIETVIDLSPIADDQIENSCMYCKSVFHCSINCKKKPNRELGLTRPISQKPIIYKVHRDNNHLSPVQNEQKSWNKTQKRSNKVYNSKKLVIIDTGSGVNITNDKTLLHNYEDSNRSTRFFGIGKNSSVSVKGYGYIKIKNGHNNTDNKCLLTYYVPEEESTIISCYDLAKKTKMVLSRKYTRLGNKIIKIKTKIVNGVIHVKMNELIERPSDDSKINAIKPTSSPGFKLNKRSITLEDAHKRMGHTGIQQIENSIKHNHYEESLDLIKEPNEFWCQTCKISKATKRNHYTGSMNNHSTDHEPGSSWCMDIFGPVSSSNADTKRYMLIMVDNNTRYCMTSTHFNKNAETILAQVRKNIQYVETQFDRKVREINSDRGTEFTNDQIEEYFISKGIHHILTSTQDHAANGRAERYIRTIITDATTLLRQSNLRVKFWEYAVTSATNIRNYLEHKSTGKLPLKAISRQPVTVRLMSFLPFGEKGIIWNHNHKKLKPSGLPSIILCKDPNSYGYKFFIPSKNKIVTSDNYTIPNYTMDGRVRNTQNINKSHQFSSDNDDEEDQIETVTNLCEALENYEDDNKPITRLEDLFTEEELSQIDSNAKYPSPSNNLEGDLDYVFSDVEESGDYDVESELSTTNNSISTDKNKILSNKDFNSELASTEISISGIDKKGLINTSHIDEDKYDEKVHRIPSIIQEKLVGSKNTIKINDENKISDRIRSKNIGSILNTGLSRCVDITDESITNKDESMHNAKPELIQEQLKKTNHETSFPKEGSIGTNVKFRNTNNEISLKTGDTSLPIKTLESINNHHSNDYSTNKVEKFEKENHHPPPIEDIVDMSDQTDMESNCQDGNNLKELKVTDKNVPTDNGTNVSPRLEQNIEASGSPVQTVNKSAFLNKEFSSLNMKRKRKRHDKNNSLTSYELERDKKRSKKNRVKLIPDNMETVSAPKIRAIYYNEAISKNPDLKEKHEYKQAYHKELQNLKDMKVFDVDVKYSRSEIPDNLIVPTNTIFTKKRNGIYKARIVCRGDTQSPDTYSVITTESLNHNHIKIFLMIANNRNMFMKTLDINHAFLYAKLEEEIYIPHPHDRRCVVKLNKALYGLKQSPKEWNDHLRQYLNGIGLKDNSYTPGLYQTEDKNLMIAVYVDDCVIAASNEQRLDEFINKLKSNFELKITGTLIDDVLDTDILGMDLVYNKRLGTIDLTLKSFINRMDKKYNEELKKIRKSSIPHMSTYKIDPKKDVLQMSEEEFRQGVLKLQQLLGELNYVRHKCRYDIEFAVKKVARLVNYPHERVFYMIYKIIQYLVRYKDIGIHYDRDCNKDKKVIAITDASVGSEYDAQSRIGVILWYGMNIFNVYSNKSTNRCVSSTEAELHAIYEGYADSETLKVTLKELGEGDNNDIVMITDSKPAIQGLNRSYQQPKEKFTWIKTEIIKEKIKEKSIKLLKITGKGNIADLLTKPVSASDFKRFIQVLKNKITSQDILASTDY.

The stretch at 39–115 (RKVSIKDEQV…IQLLETNENN (77 aa)) forms a coiled coil. Residues 382–502 (NNHLSPVQNE…KTKMVLSRKY (121 aa)) form a ty4 protease region. The active-site For protease activity; shared with dimeric partner is Asp415. Positions 540-600 (AIKPTSSPGF…EPNEFWCQTC (61 aa)) are integrase-type zinc finger-like. The 168-residue stretch at 620–787 (TDHEPGSSWC…LPLKAISRQP (168 aa)) folds into the Integrase catalytic domain. Positions 631 and 696 each coordinate Mg(2+). The disordered stretch occupies residues 1224–1250 (KRKRKRHDKNNSLTSYELERDKKRSKK). In terms of domain architecture, Reverse transcriptase Ty1/copia-type spans 1376–1511 (RNMFMKTLDI…DILGMDLVYN (136 aa)). Asp1384, Asp1463, Asp1464, Asp1645, Glu1687, and Asp1721 together coordinate Mg(2+). The 147-residue stretch at 1645–1791 (DASVGSEYDA…KRFIQVLKNK (147 aa)) folds into the RNase H Ty1/copia-type domain.

The protease is a homodimer, whose active site consists of two apposed aspartic acid residues. Post-translationally, proteolytically processed into capsid protein (CA), Ty4 protease (PR), integrase (IN) and reverse transcriptase/ribonuclease H (RT) proteins. Initially, virus-like particles (VLPs) are composed of the structural unprocessed proteins Gag and Gag-Pol, and also contain the host initiator methionine tRNA (tRNA(i)-Met) which serves as a primer for minus-strand DNA synthesis, and a dimer of genomic Ty RNA. Processing of the polyproteins occurs within the particle and proceeds by an ordered pathway, called maturation. First, the protease (PR) is released by autocatalytic cleavage of the Gag-Pol polyprotein, and this cleavage is a prerequisite for subsequent processing at the remaining sites to release the mature structural and catalytic proteins. Maturation takes place prior to the RT reaction and is required to produce transposition-competent VLPs.

The protein localises to the cytoplasm. The protein resides in the nucleus. It carries out the reaction DNA(n) + a 2'-deoxyribonucleoside 5'-triphosphate = DNA(n+1) + diphosphate. The enzyme catalyses Endonucleolytic cleavage to 5'-phosphomonoester.. Functionally, capsid protein (CA) is the structural component of the virus-like particle (VLP), forming the shell that encapsulates the retrotransposons dimeric RNA genome. Its function is as follows. The aspartyl protease (PR) mediates the proteolytic cleavages of the Gag and Gag-Pol polyproteins after assembly of the VLP. Reverse transcriptase/ribonuclease H (RT) is a multifunctional enzyme that catalyzes the conversion of the retro-elements RNA genome into dsDNA within the VLP. The enzyme displays a DNA polymerase activity that can copy either DNA or RNA templates, and a ribonuclease H (RNase H) activity that cleaves the RNA strand of RNA-DNA heteroduplexes during plus-strand synthesis and hydrolyzes RNA primers. The conversion leads to a linear dsDNA copy of the retrotransposon that includes long terminal repeats (LTRs) at both ends. In terms of biological role, integrase (IN) targets the VLP to the nucleus, where a subparticle preintegration complex (PIC) containing at least integrase and the newly synthesized dsDNA copy of the retrotransposon must transit the nuclear membrane. Once in the nucleus, integrase performs the integration of the dsDNA into the host genome. In Saccharomyces cerevisiae (strain ATCC 204508 / S288c) (Baker's yeast), this protein is Transposon Ty4-J Gag-Pol polyprotein (TY4B-J).